A 341-amino-acid chain; its full sequence is Methionine import ATP-binding protein MetN 2 (341 aa).

The ABC transporter domain occupies I2–V241. G38–S45 provides a ligand contact to ATP.

This sequence belongs to the ABC transporter superfamily. Methionine importer (TC 3.A.1.24) family. The complex is composed of two ATP-binding proteins (MetN), two transmembrane proteins (MetI) and a solute-binding protein (MetQ).

The protein resides in the cell membrane. It carries out the reaction L-methionine(out) + ATP + H2O = L-methionine(in) + ADP + phosphate + H(+). The enzyme catalyses D-methionine(out) + ATP + H2O = D-methionine(in) + ADP + phosphate + H(+). In terms of biological role, part of the ABC transporter complex MetNIQ involved in methionine import. Responsible for energy coupling to the transport system. The polypeptide is Methionine import ATP-binding protein MetN 2 (Staphylococcus aureus (strain N315)).